The primary structure comprises 258 residues: Global transcriptional regulator CodY (258 aa).

The GAF domain stretch occupies residues 1–156 (MSSLLDKTRM…SATIIGLEIL (156 aa)). A DNA-binding region (H-T-H motif) is located at residues 204–223 (ASKIADKVGITRSVIVNALR).

It belongs to the CodY family.

It is found in the cytoplasm. DNA-binding global transcriptional regulator which is involved in the adaptive response to starvation and acts by directly or indirectly controlling the expression of numerous genes in response to nutrient availability. During rapid exponential growth, CodY is highly active and represses genes whose products allow adaptation to nutrient depletion. The polypeptide is Global transcriptional regulator CodY (Clostridium botulinum (strain ATCC 19397 / Type A)).